We begin with the raw amino-acid sequence, 164 residues long: Probable Brix domain-containing ribosomal biogenesis protein (164 aa).

One can recognise a Brix domain in the interval 1–164 (MIITTSRKPS…IKTVKILDIE (164 aa)).

Functionally, probably involved in the biogenesis of the ribosome. The chain is Probable Brix domain-containing ribosomal biogenesis protein from Methanococcus maripaludis (strain DSM 14266 / JCM 13030 / NBRC 101832 / S2 / LL).